A 215-amino-acid chain; its full sequence is Peptide methionine sulfoxide reductase MsrA (215 aa).

The active site involves cysteine 57.

Belongs to the MsrA Met sulfoxide reductase family.

The catalysed reaction is L-methionyl-[protein] + [thioredoxin]-disulfide + H2O = L-methionyl-(S)-S-oxide-[protein] + [thioredoxin]-dithiol. It carries out the reaction [thioredoxin]-disulfide + L-methionine + H2O = L-methionine (S)-S-oxide + [thioredoxin]-dithiol. Its function is as follows. Has an important function as a repair enzyme for proteins that have been inactivated by oxidation. Catalyzes the reversible oxidation-reduction of methionine sulfoxide in proteins to methionine. In Saccharophagus degradans (strain 2-40 / ATCC 43961 / DSM 17024), this protein is Peptide methionine sulfoxide reductase MsrA.